The chain runs to 255 residues: Ribonuclease HII (255 aa).

The RNase H type-2 domain occupies 70 to 255 (EYIAGVDEVG…FEPVKKILLK (186 aa)). Residues Asp76, Glu77, and Asp168 each contribute to the a divalent metal cation site.

It belongs to the RNase HII family. The cofactor is Mn(2+). Requires Mg(2+) as cofactor.

Its subcellular location is the cytoplasm. The catalysed reaction is Endonucleolytic cleavage to 5'-phosphomonoester.. In terms of biological role, endonuclease that specifically degrades the RNA of RNA-DNA hybrids. This is Ribonuclease HII from Ligilactobacillus salivarius (strain UCC118) (Lactobacillus salivarius).